Here is a 113-residue protein sequence, read N- to C-terminus: Biotrophy-associated secreted protein 3 (113 aa).

Positions 1-20 are cleaved as a signal peptide; the sequence is MQFSTVSFAIFAILPAMVAA.

It is found in the secreted. Functionally, secreted effector involved in biotrophic colonization of plant cells. The protein is Biotrophy-associated secreted protein 3 of Pyricularia oryzae (strain 70-15 / ATCC MYA-4617 / FGSC 8958) (Rice blast fungus).